A 452-amino-acid chain; its full sequence is Friend leukemia integration 1 transcription factor (452 aa).

Phosphoserine is present on Ser-39. The PNT domain occupies 112 to 198; sequence PPPPNMTTNE…SHLSYLRESS (87 aa). Positions 209 to 271 are disordered; sequence DQSSRLSVKE…PYQILGPTSS (63 aa). Basic and acidic residues predominate over residues 215–226; that stretch reads SVKEDPSYDSVR. Polar residues predominate over residues 248–257; that stretch reads QTISKNTEQR. A DNA-binding region (ETS) is located at residues 281–361; the sequence is IQLWQFLLEL…HGKRYAYKFD (81 aa). A disordered region spans residues 433 to 452; sequence NPNVPRHPNTHVPSHLGSYY.

Belongs to the ETS family. In terms of assembly, can form homodimers or heterodimers with ETV6/TEL1.

It localises to the nucleus. Its function is as follows. Sequence-specific transcriptional activator. Recognizes the DNA sequence 5'-C[CA]GGAAGT-3'. This Homo sapiens (Human) protein is Friend leukemia integration 1 transcription factor (FLI1).